Consider the following 214-residue polypeptide: MHLALFGATFDPPHNGHLALCLFARELLGIDKLIVSVSNNPFKPESGRADVHRMRMAELLTQEINLTGAFSEVSGWELEKKQPSYTVDLLRYLRTLYPADKLTLLVGEDSFREFSKWKESETFCSLSDVVVFRRVSTQSESTPRPEIIPCEACISFVNFACDISSTLVRSVVASGRSISTLVPPSVHRYIMEYGLYAGEEHHATSIPEPKPRES.

It belongs to the NadD family.

It catalyses the reaction nicotinate beta-D-ribonucleotide + ATP + H(+) = deamido-NAD(+) + diphosphate. Its pathway is cofactor biosynthesis; NAD(+) biosynthesis; deamido-NAD(+) from nicotinate D-ribonucleotide: step 1/1. Its function is as follows. Catalyzes the reversible adenylation of nicotinate mononucleotide (NaMN) to nicotinic acid adenine dinucleotide (NaAD). The polypeptide is Probable nicotinate-nucleotide adenylyltransferase (Pelodictyon phaeoclathratiforme (strain DSM 5477 / BU-1)).